Here is a 306-residue protein sequence, read N- to C-terminus: Ribonuclease Z (306 aa).

Zn(2+) contacts are provided by His-63, His-65, Asp-67, His-68, His-141, Asp-208, and His-266. Asp-67 functions as the Proton acceptor in the catalytic mechanism.

It belongs to the RNase Z family. Homodimer. Requires Zn(2+) as cofactor.

It catalyses the reaction Endonucleolytic cleavage of RNA, removing extra 3' nucleotides from tRNA precursor, generating 3' termini of tRNAs. A 3'-hydroxy group is left at the tRNA terminus and a 5'-phosphoryl group is left at the trailer molecule.. Zinc phosphodiesterase, which displays some tRNA 3'-processing endonuclease activity. Probably involved in tRNA maturation, by removing a 3'-trailer from precursor tRNA. The protein is Ribonuclease Z of Chlamydia caviae (strain ATCC VR-813 / DSM 19441 / 03DC25 / GPIC) (Chlamydophila caviae).